Here is a 431-residue protein sequence, read N- to C-terminus: Pheromone alpha factor receptor (431 aa).

Topologically, residues 1–49 are extracellular; that stretch reads MSDAAPSLSNLFYDPTYNPGQSTINYTSIYGNGSTITFDELQGLVNSTV. Asn-25 and Asn-32 each carry an N-linked (GlcNAc...) asparagine glycan. Residues 50–72 form a helical membrane-spanning segment; that stretch reads TQAIMFGVRCGAAALTLIVMWMT. The Glycine zipper motif motif lies at 53–61; it reads IMFGVRCGA. The Cytoplasmic segment spans residues 73 to 78; sequence SRSRKT. The helical transmembrane segment at 79–102 threads the bilayer; it reads PIFIINQVSLFLIILHSALYFKYL. At 103 to 132 the chain is on the extracellular side; it reads LSNYSSVTYALTGFPQFISRGDVHVYGATN. The chain crosses the membrane as a helical span at residues 133–156; it reads IIQVLLVASIETSLVFQIKVIFTG. The Cytoplasmic portion of the chain corresponds to 157-163; sequence DNFKRIG. The helical transmembrane segment at 164–188 threads the bilayer; it reads LMLTSISFTLGIATVTMYFVSAVKG. The Extracellular portion of the chain corresponds to 189 to 205; sequence MIVTYNDVSATQDKYFN. The helical transmembrane segment at 206 to 230 threads the bilayer; that stretch reads ASTILLASSINFMSFVLVVKLILAI. Over 231 to 241 the chain is Cytoplasmic; that stretch reads RSRRFLGLKQF. Residues 242–266 form a helical membrane-spanning segment; that stretch reads DSFHILLIMSCQSLLVPSIIFILAY. Residues 267 to 275 are Extracellular-facing; the sequence is SLKPNQGTD. A helical membrane pass occupies residues 276-299; sequence VLTTVATLLAVLSLPLSSMWATAA. The Cytoplasmic segment spans residues 300–431; it reads NNASKTNTIT…KFWTEDNNNL (132 aa). Ser-310 and Ser-315 each carry phosphoserine. Residue Thr-329 is modified to Phosphothreonine. Ser-331 is modified (phosphoserine). Residue Lys-337 forms a Glycyl lysine isopeptide (Lys-Gly) (interchain with G-Cter in ubiquitin) linkage. Ser-360 bears the Phosphoserine mark. Thr-363 carries the phosphothreonine modification. Ser-366 bears the Phosphoserine mark. Lys-374 participates in a covalent cross-link: Glycyl lysine isopeptide (Lys-Gly) (interchain with G-Cter in ubiquitin). Over residues 379-389 the composition is skewed to polar residues; that stretch reads QLPTPTSSKNT. The tract at residues 379-406 is disordered; that stretch reads QLPTPTSSKNTRIGPFADASYKEGEVEP. Thr-382 carries the post-translational modification Phosphothreonine. 2 positions are modified to phosphoserine: Ser-385 and Ser-386. Lys-400 is covalently cross-linked (Glycyl lysine isopeptide (Lys-Gly) (interchain with G-Cter in ubiquitin)). Residues Thr-411 and Thr-414 each carry the phosphothreonine modification. Residue Lys-422 forms a Glycyl lysine isopeptide (Lys-Gly) (interchain with G-Cter in ubiquitin) linkage.

It belongs to the G-protein coupled receptor 4 family. Homodimer. Might also for higher order homooligomers such as homotetramers. Oligomerization is mediated significantly by transmembrane domain 1 (TMD1), possibly in concert with the N-terminal extracellular domain and TMD2. Interaction with GPA1, its dedicated G-alpha protein. Post-translationally, undergoes hyperphosphorylation of the C-terminal cytoplasmic domain after binding of the alpha-factor, which leads to internalization by endocytosis. In terms of processing, monoubiquitination at Lys-337 triggers internalization of STE2. N-glycosylated. N-glycosylation may be involved in the sorting process for misfolded STE2 protein. As to expression, expressed in MATa strains but not in MATalpha strains.

The protein resides in the cell membrane. In terms of biological role, fungal class D1 G-protein-coupled receptor that acts as an alpha-factor pheromone receptor performing pheromone-dependent signal transduction involved in cellular conjugation, mating projection assembly, and in cell fusion. Following alpha-factor-binding, the signal is transmitted via a tripartite G protein consisting of alpha-, beta- and gamma-subunits (GAP1, STE4 and STE8 respectively) that prepares the cell for conjugation. In the inactive state, the cytoplasmic end of transmembrane domain 7 (TMD7) is unstructured and packs between TMD1-6, blocking the G protein coupling site. Agonist binding results in the outward movement of the extracellular ends of TMD6 and TMD7 by 6 Angstroms. On the intracellular surface, the G protein coupling site is formed by a 20 Angstroms outward movement of the unstructured region in TMD7 that unblocks the site, and a 12 Angstroms inward movement of TMD6. This Saccharomyces cerevisiae (strain ATCC 204508 / S288c) (Baker's yeast) protein is Pheromone alpha factor receptor (STE2).